Reading from the N-terminus, the 281-residue chain is L-cysteine S-thiosulfotransferase subunit SoxA (281 aa).

A signal peptide spans 1-25 (MTKHGFLLATLVLAGATLPIGPVTA). Cys99 and Cys130 are disulfide-bonded. The Cytochrome c domain maps to 175-281 (AAYEQGKRFY…LELNGPGARK (107 aa)). 2 residues coordinate heme: Cys195 and His199. Arg238 provides a ligand contact to substrate. Cys242 is a binding site for heme. Cys242 serves as the catalytic Cysteine persulfide intermediate.

Belongs to the SoxA family. As to quaternary structure, heterodimer of SoxA and SoxX. Heme is required as a cofactor. In terms of processing, cysteine persulfide at Cys-242.

It localises to the periplasm. The catalysed reaction is L-cysteinyl-[SoxY protein] + thiosulfate + 2 Fe(III)-[cytochrome c] = S-sulfosulfanyl-L-cysteinyl-[SoxY protein] + 2 Fe(II)-[cytochrome c] + 2 H(+). The enzyme catalyses S-sulfanyl-L-cysteinyl-[SoxY protein] + thiosulfate + 2 Fe(III)-[cytochrome c] = S-(2-sulfodisulfanyl)-L-cysteinyl-[SoxY protein] + 2 Fe(II)-[cytochrome c] + 2 H(+). Functionally, C-type monoheme cytochrome, which is part of the SoxAX cytochrome complex involved in sulfur oxidation. The SoxAX complex catalyzes the formation of a heterodisulfide bond between the conserved cysteine residue on a sulfur carrier SoxYZ complex subunit SoxY and thiosulfate or other inorganic sulfur substrates. This leads to the intermediary formation of conspicuous sulfur globules inside of the cells. In Allochromatium vinosum (Chromatium vinosum), this protein is L-cysteine S-thiosulfotransferase subunit SoxA.